Consider the following 509-residue polypeptide: Leucine-rich repeat-containing protein 14 (509 aa).

The stretch at 111–146 (RQRLRLLDMTGMQEEGLEQNPDTMSLWSRTVTLAKA) is one LRR 1; degenerate repeat. One copy of the LRR 2; degenerate repeat lies at 210–234 (RLQCRDFRAEELSLRSTAGLLELLN). An LRR 3; degenerate repeat occupies 235–262 (PGSVRQIDLRFNNLGLSGLNVLLPHMAK). An LRR 4; degenerate repeat occupies 263 to 298 (FSHLQSLKLPYSNVDVRRLSPVMEEGLQSFASQLGQ). 5 LRR repeats span residues 299 to 323 (LGALKELNLGSSRLSGRLRQLLGGL), 324 to 355 (QRPLESLELAFCSLLPMDLSYLSQSSHMSSLR), 356 to 374 (KLDLSGNNLSEFLLTPFLH), 380 to 407 (SGHLLYLDVMECKLADAHLSALMPILCR), and 408 to 432 (CSWLRYLGLFCNPISSDGLRMVLQN).

This sequence belongs to the PRAME family. LRRC14 subfamily.

Its subcellular location is the cytoplasm. The polypeptide is Leucine-rich repeat-containing protein 14 (Xenopus laevis (African clawed frog)).